The chain runs to 145 residues: uncharacterized protein (145 aa).

To R.meliloti R00649.

This is an uncharacterized protein from Agrobacterium fabrum (strain C58 / ATCC 33970) (Agrobacterium tumefaciens (strain C58)).